A 490-amino-acid chain; its full sequence is 2-succinylbenzoate--CoA ligase (490 aa).

The protein belongs to the ATP-dependent AMP-binding enzyme family. MenE subfamily.

It carries out the reaction 2-succinylbenzoate + ATP + CoA = 2-succinylbenzoyl-CoA + AMP + diphosphate. The protein operates within quinol/quinone metabolism; 1,4-dihydroxy-2-naphthoate biosynthesis; 1,4-dihydroxy-2-naphthoate from chorismate: step 5/7. Its pathway is quinol/quinone metabolism; menaquinone biosynthesis. Converts 2-succinylbenzoate (OSB) to 2-succinylbenzoyl-CoA (OSB-CoA). The protein is 2-succinylbenzoate--CoA ligase of Geobacillus kaustophilus (strain HTA426).